A 391-amino-acid chain; its full sequence is S-adenosylmethionine synthase (391 aa).

Histidine 14 provides a ligand contact to ATP. Mg(2+) is bound at residue aspartate 16. Glutamate 42 lines the K(+) pocket. Glutamate 55 and glutamine 98 together coordinate L-methionine. The interval 98 to 108 is flexible loop; that stretch reads QSVDIAMGVDE. ATP contacts are provided by residues 172-174, 238-239, aspartate 247, 253-254, alanine 270, and lysine 274; these read DGK, RF, and RK. Aspartate 247 contacts L-methionine. Position 278 (lysine 278) interacts with L-methionine.

The protein belongs to the AdoMet synthase family. As to quaternary structure, homotetramer; dimer of dimers. The cofactor is Mg(2+). Requires K(+) as cofactor.

The protein resides in the cytoplasm. It catalyses the reaction L-methionine + ATP + H2O = S-adenosyl-L-methionine + phosphate + diphosphate. The protein operates within amino-acid biosynthesis; S-adenosyl-L-methionine biosynthesis; S-adenosyl-L-methionine from L-methionine: step 1/1. In terms of biological role, catalyzes the formation of S-adenosylmethionine (AdoMet) from methionine and ATP. The overall synthetic reaction is composed of two sequential steps, AdoMet formation and the subsequent tripolyphosphate hydrolysis which occurs prior to release of AdoMet from the enzyme. The sequence is that of S-adenosylmethionine synthase from Clostridium botulinum (strain Kyoto / Type A2).